The sequence spans 310 residues: Probable manganese-dependent inorganic pyrophosphatase (310 aa).

Residues H10, D14, D16, D75, H97, and D149 each contribute to the Mn(2+) site.

Belongs to the PPase class C family. Mn(2+) is required as a cofactor.

The protein resides in the cytoplasm. It carries out the reaction diphosphate + H2O = 2 phosphate + H(+). This Clostridium acetobutylicum (strain ATCC 824 / DSM 792 / JCM 1419 / IAM 19013 / LMG 5710 / NBRC 13948 / NRRL B-527 / VKM B-1787 / 2291 / W) protein is Probable manganese-dependent inorganic pyrophosphatase.